Consider the following 648-residue polypeptide: Transcription termination factor FttA (648 aa).

Positions 9 to 76 are KHa; it reads DDILKEIREI…ISVRPDPDIL (68 aa). The segment at 77-144 is KHb; sequence LPPEKAEELI…WAPRVVRTPP (68 aa). Positions 185-395 are metallo-beta-lactamase N-terminus; the sequence is WIRITGLGGF…LVMESTYGGS (211 aa). Zn(2+)-binding residues include His253, His255, Asp257, His258, His341, and Asp364. A beta-Casp region spans residues 396 to 589; it reads NDYQMPREEA…MEVHTIDGFS (194 aa). The metallo-beta-lactamase C-terminus stretch occupies residues 590 to 648; it reads GHADRRELMSYVARVRPRPERIITVHGEAHKCLDLSSSIHKKFGISTRAPNNLDAIRLK. Residue His615 coordinates Zn(2+).

Belongs to the metallo-beta-lactamase superfamily. RNA-metabolizing metallo-beta-lactamase-like family. FttA subfamily. As to quaternary structure, homodimer. Probably interacts transiently with RNA polymerase (RNAP), (via at least the RNAP stalk subunits Rpo4 and Rpo7), interacts transiently with the Spt4-Spt5 complex. Requires Zn(2+) as cofactor.

With respect to regulation, transcription termination is stimulated by the Spt4-Spt5 complex. Dipicolinic acid inhibits FttA-mediated termination in vitro and inhibits growth in vivo. Terminates transcription on the whole genome. Termination is linked to FttA-mediated RNA cleavage and does not require NTP hydrolysis. Cleaves endonucleolytically at the RNA exit channel of RNA polymerase (RNAP); the 5'-3' exonuclease activity of this protein degrades the nascent RNA released from RNAP. Functionally, facilitates transcription termination; addition of this factor to stalled transcription elongation complexes (TEC) promotes nascent transcript cleavage and releases RNA polymerase (RNAP) from DNA in vitro. Transcription termination competes with productive transcription elongation. Termination is stimulated by C-rich transcripts and inhibited by G-rich transcripts; the Spt4-Spt5 complex enhances termination on C-less transcripts. Yields an approximately 100 nucleotide RNA, consistent with endonucleolytic cleavage at the RNA exit channel of RNAP. This is Transcription termination factor FttA from Thermococcus kodakarensis (strain ATCC BAA-918 / JCM 12380 / KOD1) (Pyrococcus kodakaraensis (strain KOD1)).